Consider the following 113-residue polypeptide: Integration host factor subunit alpha (113 aa).

2 disordered regions span residues 59-80 and 94-113; these read GNFQ…GETI and QKLK…ASAE. Positions 104–113 are enriched in pro residues; the sequence is NSPPDPASAE.

Belongs to the bacterial histone-like protein family. As to quaternary structure, heterodimer of an alpha and a beta chain.

In terms of biological role, this protein is one of the two subunits of integration host factor, a specific DNA-binding protein that functions in genetic recombination as well as in transcriptional and translational control. In Bordetella pertussis (strain Tohama I / ATCC BAA-589 / NCTC 13251), this protein is Integration host factor subunit alpha.